Reading from the N-terminus, the 199-residue chain is Venom allergen 5 (199 aa).

2 cysteine pairs are disulfide-bonded: C21/C87 and C167/C184. Positions 38–186 (LKVHNDERQK…FYKCYLACNY (149 aa)) constitute an SCP domain. Residues 47–67 (KVKAGQETRGNPGPQPAASNM) are disordered.

The protein belongs to the CRISP family. Venom allergen 5-like subfamily. In terms of tissue distribution, expressed by the venom gland.

The protein resides in the secreted. This is Venom allergen 5 from Brachyponera chinensis (Asian needle ant).